The sequence spans 26 residues: Melittin (26 aa).

Glycine 1 carries the post-translational modification N-formylglycine; partial. Glutamine 26 carries the glutamine amide modification.

It belongs to the melittin family. In terms of assembly, monomer (in solution and for integration into membranes), homotetramer (in solution and potentially as a toroidal pore in membranes), and potenially homomultimer (as a toroidal pore in membranes). As to expression, expressed by the venom gland.

Its subcellular location is the secreted. It localises to the target cell membrane. Functionally, main toxin of bee venom with strong hemolytic activity and antimicrobial activity. It has enhancing effects on bee venom phospholipase A2 activity. This amphipathic toxin binds to negatively charged membrane surface and forms pore by inserting into lipid bilayers inducing the leakage of ions and molecules and the enhancement of permeability that ultimately leads to cell lysis. It acts as a voltage-gated pore with higher selectivity for anions over cations. The ion conductance has been shown to be voltage-dependent. Self-association of melittin in membranes is promoted by high ionic strength, but not by the presence of negatively charged lipids. In vivo, intradermal injection into healthy human volunteers produce sharp pain sensation and an inflammatory response. It produces pain by activating primary nociceptor cells directly and indirectly due to its ability to activate plasma membrane phospholipase A2 and its pore-forming activity. The sequence is that of Melittin (MELT) from Apis florea (Dwarf honeybee).